A 321-amino-acid chain; its full sequence is Ribosomal RNA small subunit methyltransferase H (321 aa).

S-adenosyl-L-methionine-binding positions include 29 to 31, D48, Y76, D97, and Q104; that span reads GGH. Residues 277 to 321 form a disordered region; it reads LTRGAEPASETEKAENPRAASVRLRAVERTAPNPDHTRKPTGGAS.

The protein belongs to the methyltransferase superfamily. RsmH family.

It localises to the cytoplasm. The catalysed reaction is cytidine(1402) in 16S rRNA + S-adenosyl-L-methionine = N(4)-methylcytidine(1402) in 16S rRNA + S-adenosyl-L-homocysteine + H(+). Functionally, specifically methylates the N4 position of cytidine in position 1402 (C1402) of 16S rRNA. This chain is Ribosomal RNA small subunit methyltransferase H, found in Frankia casuarinae (strain DSM 45818 / CECT 9043 / HFP020203 / CcI3).